A 394-amino-acid chain; its full sequence is N-acetylgalactosamine-6-phosphate deacetylase (394 aa).

Glu137 contributes to the Zn(2+) binding site. Residue 148-149 (CH) participates in substrate binding. Residues His201 and His222 each coordinate Zn(2+). Residues 225–226 (NG), Arg233, and 254–257 (DGQH) contribute to the substrate site. Asp280 acts as the Proton donor/acceptor in catalysis. Residue 313–315 (LAG) coordinates substrate.

It belongs to the metallo-dependent hydrolases superfamily. NagA family.

It localises to the cytoplasm. The catalysed reaction is N-acetyl-D-galactosamine 6-phosphate + H2O = D-galactosamine 6-phosphate + acetate. It carries out the reaction N-acetyl-D-glucosamine 6-phosphate + H2O = D-glucosamine 6-phosphate + acetate. In terms of biological role, involved in the pathway of N-acetyl-D-galactosamine degradation. Catalyzes the conversion of N-acetyl-D-galactosamine 6-phosphate to D-galactosamine 6-phosphate and acetate. It can also catalyze the conversion of N-acetyl-D-glucosamine 6-phosphate. In Shewanella sp. (strain ANA-3), this protein is N-acetylgalactosamine-6-phosphate deacetylase.